A 257-amino-acid chain; its full sequence is tRNA (cytidine/uridine-2'-O-)-methyltransferase TrmJ (257 aa).

Residues 79–81, Gly114, Ile134, and 141–143 each bind S-adenosyl-L-methionine; these read TSA and SSL.

Belongs to the class IV-like SAM-binding methyltransferase superfamily. RNA methyltransferase TrmH family. As to quaternary structure, homodimer.

The protein resides in the cytoplasm. It carries out the reaction cytidine(32) in tRNA + S-adenosyl-L-methionine = 2'-O-methylcytidine(32) in tRNA + S-adenosyl-L-homocysteine + H(+). The enzyme catalyses uridine(32) in tRNA + S-adenosyl-L-methionine = 2'-O-methyluridine(32) in tRNA + S-adenosyl-L-homocysteine + H(+). Catalyzes the formation of 2'O-methylated cytidine (Cm32) or 2'O-methylated uridine (Um32) at position 32 in tRNA. The protein is tRNA (cytidine/uridine-2'-O-)-methyltransferase TrmJ (trmJ) of Yersinia enterocolitica serotype O:8 / biotype 1B (strain NCTC 13174 / 8081).